Here is a 42-residue protein sequence, read N- to C-terminus: Daisho1 (42 aa).

The N-terminal stretch at methionine 1–alanine 20 is a signal peptide. Residues glutamate 21–proline 26 constitute a propeptide, removed by a dipeptidylpeptidase. The residue at position 41 (threonine 41) is a Threonine amide.

In terms of tissue distribution, hemolymph (at protein level).

The protein localises to the secreted. Peptide which plays a role in the humoral immune response to a subset of filamentous fungi, including F.oxysporum and F.verticillioides. The polypeptide is Daisho1 (Drosophila melanogaster (Fruit fly)).